The primary structure comprises 317 residues: Transcription factor elt-3 (317 aa).

The tract at residues 1–34 is disordered; that stretch reads METANYYLPSPPYSSTSSSDSRESRMNTPIPTTY. A GATA-type zinc finger spans residues 244 to 268; that stretch reads CSNCKTRETTLWRRNGEGGVECNAC. A disordered region spans residues 290–317; it reads KRNRRPRNESPNSAIRNTHQRHGHAAAC. Basic residues predominate over residues 307 to 317; sequence THQRHGHAAAC.

As to quaternary structure, interacts with skn-1; interaction may enhance transcriptional activation of target genes. In terms of tissue distribution, expressed in head, trunk and tail. Expression decreases with age in the hypodermal cells and the pharyngeal-intestinal valve cells in the head, eventually showing little or no expression in about 14 day old worms. Expressed in hypodermal, but not in intestinal, cells at 1 day of age. Expression in the hypodermal and intestinal cells in the trunk region decreases quickly between day 3 and day 5 of adulthood. Expression in the tail between days 3 and 14 stays approximately uniform.

It localises to the nucleus. In terms of biological role, transcription factor. Required, in concert with signal transducer and transcription factor sta-2, for up-regulation of the vacuolar H(+)-ATPase and acceleration of lysosome maturation at molt. Involved in regulating hypodermal development, perhaps acting downstream of transcription factor elt-1. Modulates environmentally induced changes in collagen gene expression, including rol-6, sqt-1, lon-3, and dpy-13. Involved in regulating expression of various genes, including gst-4, sod-3, ugt-9, and col-144. In response to oxidative stress, required to up-regulate expression of gst-4 mRNA. Regulated by the Insulin/IGF-1-like signaling (IIS) mediated pathway. Plays a role in longevity. May regulate the expression of genes that control sensitivity to osmotic stress, in conjunction with the GATA region-binding transcription factor elt-2. May form a transcriptional circuit with GATA factors egl-18 and elt-6. The sequence is that of Transcription factor elt-3 from Caenorhabditis elegans.